The primary structure comprises 800 residues: Serine/threonine-protein kinase KIN4 (800 aa).

The Protein kinase domain occupies 46 to 313; the sequence is YIIGSTLGEG…LQTIKRHVWL (268 aa). ATP-binding positions include 52–60 and Lys-80; that span reads LGEGEFGKV. Catalysis depends on Asp-175, which acts as the Proton acceptor. Disordered stretches follow at residues 331-397 and 438-487; these read LQKE…GSKV and SARH…TSFT. Low complexity predominate over residues 348-358; the sequence is STYSSSASSYS. Ser-365 and Ser-388 each carry phosphoserine. Polar residues-rich tracts occupy residues 380–395 and 459–473; these read QLAT…STGS and GSPT…PSSK. A Phosphoserine modification is found at Ser-521. Disordered regions lie at residues 629–661 and 678–754; these read EPTN…DKDS and SLNG…PGRS. Over residues 678 to 721 the composition is skewed to polar residues; the sequence is SLNGSRSTVESRTSKGNAPPVSSRNPSGQSNRSNIKITQQQPRN. The span at 727–740 shows a compositional bias: basic and acidic residues; sequence PNPDKKINDNRIRD. Ser-748 carries the post-translational modification Phosphoserine.

The protein belongs to the protein kinase superfamily. Ser/Thr protein kinase family.

The catalysed reaction is L-seryl-[protein] + ATP = O-phospho-L-seryl-[protein] + ADP + H(+). It catalyses the reaction L-threonyl-[protein] + ATP = O-phospho-L-threonyl-[protein] + ADP + H(+). This protein is probably a serine/threonine protein kinase. In Saccharomyces cerevisiae (strain ATCC 204508 / S288c) (Baker's yeast), this protein is Serine/threonine-protein kinase KIN4 (KIN4).